The chain runs to 623 residues: Glutathione import ATP-binding protein GsiA (623 aa).

ABC transporter domains are found at residues 15–269 (VENL…RALL) and 314–564 (LRVR…RKLL). Residues 49 to 56 (GESGSGKS) and 357 to 364 (GESGSGKS) contribute to the ATP site.

This sequence belongs to the ABC transporter superfamily. Glutathione importer (TC 3.A.1.5.11) family. As to quaternary structure, the complex is composed of two ATP-binding proteins (GsiA), two transmembrane proteins (GsiC and GsiD) and a solute-binding protein (GsiB).

It is found in the cell inner membrane. The catalysed reaction is glutathione(out) + ATP + H2O = glutathione(in) + ADP + phosphate + H(+). Its function is as follows. Part of the ABC transporter complex GsiABCD involved in glutathione import. Responsible for energy coupling to the transport system. This Escherichia coli O1:K1 / APEC protein is Glutathione import ATP-binding protein GsiA.